The chain runs to 1021 residues: Sodium/potassium-transporting ATPase subunit alpha-1 (1021 aa).

Residues Met1 to Val5 constitute a propeptide that is removed on maturation. Over residues Met1–Glu11 the composition is skewed to basic and acidic residues. Residues Met1–Glu36 form a disordered region. At Gly6–Pro85 the chain is on the cytoplasmic side. Lys9 carries the post-translational modification N6-acetyllysine. Tyr10 is modified (phosphotyrosine). At Ser16 the chain carries Phosphoserine; by PKC. Lys21 is subject to N6-acetyllysine. Positions Lys26–Glu36 are enriched in basic and acidic residues. Residues Ser38 and Ser45 each carry the phosphoserine modification. Positions Pro80–Pro82 are phosphoinositide-3 kinase binding. The chain crosses the membrane as a helical span at residues Glu86 to Ala106. Topologically, residues Val107–Tyr129 are extracellular. A helical transmembrane segment spans residues Leu130 to Ala150. The Cytoplasmic segment spans residues Lys151–Ile286. Position 226 is a phosphoserine (Ser226). Tyr258 carries the post-translational modification Phosphotyrosine. A helical membrane pass occupies residues Glu287–Ile306. Topologically, residues Leu307–Ala318 are extracellular. A helical transmembrane segment spans residues Val319–Ala336. The Cytoplasmic portion of the chain corresponds to Thr337–Leu770. The active-site 4-aspartylphosphate intermediate is Asp374. A phosphoserine mark is found at Ser450 and Ser482. Lys485 serves as a coordination point for ATP. Tyr540 is modified (phosphotyrosine). A mediates interaction with SCN7A region spans residues Arg594 to Asp715. Position 666 is a phosphoserine (Ser666). The Mg(2+) site is built by Asp715 and Asp719. Residues Lys771–Ile790 form a helical membrane-spanning segment. Topologically, residues Phe791–Leu800 are extracellular. Residues Gly801–Ala821 traverse the membrane as a helical segment. The Cytoplasmic portion of the chain corresponds to Tyr822 to Lys841. A helical membrane pass occupies residues Leu842–Phe864. At Phe865–Cys916 the chain is on the extracellular side. The helical transmembrane segment at His917 to Lys936 threads the bilayer. The Cytoplasmic portion of the chain corresponds to Thr937 to Asn949. Ser941 is modified (phosphoserine; by PKA). Residues Lys950–Tyr968 form a helical membrane-spanning segment. The Extracellular segment spans residues Cys969–Pro983. A helical membrane pass occupies residues Thr984–Lys1004. The Cytoplasmic segment spans residues Leu1005–Tyr1021.

Belongs to the cation transport ATPase (P-type) (TC 3.A.3) family. Type IIC subfamily. As to quaternary structure, the sodium/potassium-transporting ATPase is composed of a catalytic alpha subunit, an auxiliary non-catalytic beta subunit and an additional regulatory subunit. Interacts with regulatory subunit FXYD1. Interacts with regulatory subunit FXYD3. Interacts with SIK1. Interacts with SLC35G1 and STIM1. Interacts with CLN3; this interaction regulates the sodium/potassium-transporting ATPase complex localization at the plasma membrane. Interacts with SCN7A; activates ATP1A1 P-type sodium:potassium-exchanging transporter activity which indirectly signals to nearby neurons to regulate sodium homeostasis. Post-translationally, phosphorylation on Tyr-10 modulates pumping activity. Phosphorylation of Ser-941 by PKA modulates the response of ATP1A1 to PKC. Dephosphorylation by protein phosphatase 2A (PP2A) following increases in intracellular sodium, leading to increase catalytic activity.

The protein resides in the cell membrane. The protein localises to the basolateral cell membrane. It localises to the sarcolemma. Its subcellular location is the cell projection. It is found in the axon. The protein resides in the melanosome. The catalysed reaction is K(+)(out) + Na(+)(in) + ATP + H2O = K(+)(in) + Na(+)(out) + ADP + phosphate + H(+). Its activity is regulated as follows. Specifically inhibited by cardiac glycosides such as digoxin or ouabain. This is the catalytic component of the active enzyme, which catalyzes the hydrolysis of ATP coupled with the exchange of sodium and potassium ions across the plasma membrane. This action creates the electrochemical gradient of sodium and potassium ions, providing the energy for active transport of various nutrients. Could also be part of an osmosensory signaling pathway that senses body-fluid sodium levels and controls salt intake behavior as well as voluntary water intake to regulate sodium homeostasis. In Ovis aries (Sheep), this protein is Sodium/potassium-transporting ATPase subunit alpha-1 (ATP1A1).